Consider the following 492-residue polypeptide: MRSDQIRQGRLAGERSGDLEHFLASMDADRWIARADLLVDMAHLLGLSRQGIIDEAPARALMAALLDLYDHGVPEEAFDERFEDVHAGKEAYLIDRVGEDFGGRLHMGRSRNDEVATCIRIRLKEEIIALLRSLVDLRATLLDVAAGHTGTVMPGFTHLQHAQPTTLAHYLLAYEQAFSRDTARLREAYARVDVSPLGSAAFASTGFPLDRAYTASLLGFSRPAGNSMDAVAARDFAIEVLADASICMTSTSRLCEELVLWSTAFVGFVRLDDAYCSSSSIMPQKKNPDVAEIMRAKAGSVAGSLAAAITITKGLPMSYNRDLQELTPHLWRGVEAARQSIPLLSGMLGSATFDAERMAAEAGRGFSTATELADVLVREYGLPFRTAHRIVGRAVRHGSLDLATLEAAAREAADFSVVELGLTREKIDAVLDPRHAVAVRNIVGGPAPEAVAAQISEQRNLLARDKAWAEETESALSGAFEHLILEARRFAA.

This sequence belongs to the lyase 1 family. Argininosuccinate lyase subfamily.

It is found in the cytoplasm. It carries out the reaction 2-(N(omega)-L-arginino)succinate = fumarate + L-arginine. Its pathway is amino-acid biosynthesis; L-arginine biosynthesis; L-arginine from L-ornithine and carbamoyl phosphate: step 3/3. This Methanoculleus marisnigri (strain ATCC 35101 / DSM 1498 / JR1) protein is Argininosuccinate lyase.